The following is a 392-amino-acid chain: Streptogrisin-D (392 aa).

Positions 1-64 (MCVSRRRNSG…AGFTFQTANA (64 aa)) are cleaved as a signal peptide. Positions 65 to 204 (SDDVPAFGAK…NRTAGEFTPL (140 aa)) are excised as a propeptide. Residues cysteine 218 and cysteine 238 are joined by a disulfide bond. Catalysis depends on charge relay system residues histidine 237, aspartate 266, and serine 348. Cysteine 342 and cysteine 369 form a disulfide bridge.

This sequence belongs to the peptidase S1 family. In terms of assembly, homodimer.

In terms of biological role, has a primary specificity for large aliphatic or aromatic amino acids. The protein is Streptogrisin-D (sprD) of Streptomyces griseus.